The following is a 667-amino-acid chain: Protein-glutamine gamma-glutamyltransferase 4 (667 aa).

N-linked (GlcNAc...) asparagine glycans are attached at residues Asn-151, Asn-220, and Asn-227. Residues Cys-256, His-315, and Asp-338 contribute to the active site. The Ca(2+) site is built by Asn-378 and Asp-380. N-linked (GlcNAc...) asparagine glycosylation is present at Asn-408. Ca(2+) is bound by residues Glu-430 and Glu-435. The interval 430 to 449 (EGSPEERKAMEKASGKRPDD) is disordered. N-linked (GlcNAc...) asparagine glycans are attached at residues Asn-472 and Asn-488.

This sequence belongs to the transglutaminase superfamily. Transglutaminase family. As to quaternary structure, homodimer. Ca(2+) is required as a cofactor. Post-translationally, the N-terminus is blocked. Probably linked to the cell membrane via a lipid-anchor, possibly a GPI-anchor. In terms of processing, N-glycosylated on 2 Asn residues by a high mannose oligosaccharide consisting of five mannose residues and a fucosylated biantennary complex glycan. As to expression, expressed in the coagulating gland, the dorsal part of the prostate and in semen (at protein level). Expressed at low levels in the lateral prostate and seminal vesicle. Not expressed in the epididymis, kidney, liver, serum, sperm plug, testes and ventral prostate.

It is found in the secreted. The protein localises to the cell membrane. It carries out the reaction L-glutaminyl-[protein] + L-lysyl-[protein] = [protein]-L-lysyl-N(6)-5-L-glutamyl-[protein] + NH4(+). Its function is as follows. Associated with the mammalian reproductive process. Plays an important role in the formation of the seminal coagulum through the cross-linking of specific proteins present in the seminal plasma. Transglutaminase is also required to stabilize the copulatory plug. The protein is Protein-glutamine gamma-glutamyltransferase 4 (Tgm4) of Rattus norvegicus (Rat).